We begin with the raw amino-acid sequence, 264 residues long: Sirohydrochlorin cobaltochelatase (264 aa).

Residues G45, I84, I85, D88, E89, and K92 each coordinate Co-sirohydrochlorin. The active-site Proton acceptor is the H145. Co(2+)-binding residues include H145 and E175. Residues L202, V203, and H207 each coordinate Co-sirohydrochlorin. Position 207 (H207) interacts with Co(2+).

It belongs to the CbiK family. Homotrimer.

The enzyme catalyses Co-sirohydrochlorin + 2 H(+) = sirohydrochlorin + Co(2+). The catalysed reaction is Co-precorrin-2 + 3 H(+) = precorrin-2 + Co(2+). It participates in cofactor biosynthesis; adenosylcobalamin biosynthesis; cob(II)yrinate a,c-diamide from sirohydrochlorin (anaerobic route): step 1/10. Its function is as follows. Cobalt chelatase responsible for the insertion of cobalt during anaerobic cobalamin biosynthesis. Can catalyze the insertion of Co(2+) into either sirohydrochlorin or precorrin-2. It is not clear which is the natural substrate in Salmonella. This chain is Sirohydrochlorin cobaltochelatase, found in Salmonella typhimurium (strain LT2 / SGSC1412 / ATCC 700720).